The sequence spans 590 residues: 2-hydroxyacyl-CoA lyase (590 aa).

2-hydroxyisobutanoyl-CoA-binding positions include Gly43, Gln128, Gln255, 273–274, and Arg362; that span reads RS. 410 to 412 is a thiamine diphosphate binding site; that stretch reads GDL. Arg417 contributes to the 2-hydroxyisobutanoyl-CoA binding site. Thiamine diphosphate is bound at residue Gly433. Asp460 provides a ligand contact to Mg(2+). Residues 461–462 and 487–492 contribute to the thiamine diphosphate site; these read GA and NRAWNI. The Mg(2+) site is built by Asn487 and Ala489. The active-site Proton acceptor is Glu493. Residue 561 to 564 coordinates 2-hydroxyisobutanoyl-CoA; it reads DSGK. The segment at 566 to 590 is C-terminal lid; the sequence is LGFVPDYQALTPWNDAEVARRQEGI.

Belongs to the TPP enzyme family. In terms of assembly, a homotetramer formed by a dimer of dimers; active sites are located in the dimer interface. The cofactor is Mg(2+). It depends on thiamine diphosphate as a cofactor.

It catalyses the reaction 2-hydroxyisobutanoyl-CoA = formyl-CoA + acetone. With respect to regulation, activity is stimulated by thiamine diphosphate. A lyase that reversibly degrades 2-hydroxyisobutyryl-CoA (2-HIB-CoA) to acetone and formyl-CoA. Probably also cleaves 2-hydroxy-2-methylbutyryl-CoA to butanone and formyl-CoA. Does not act on 2-hydroxy-2-ethylbutyryl-CoA. A C-terminal lid closes the active site upon substrate binding, and with residues Leu-127 and Ile-492 restricts the size of the active site cavity so it can only use short-chain (C4 and C5) acyl substrates. Part of a pathway that allows cells to grow on 2-methylpropane-1,2-diol or 2-hydroxyisobutyric acid (2-HIBA) as a sole carbon source. The polypeptide is 2-hydroxyacyl-CoA lyase (Actinomycetospora chiangmaiensis (strain DSM 45062 / JCM 15998 / CCTCC AA 205017 / NBRC 104400 / YIM 0006)).